The chain runs to 740 residues: MGSSTGRRGLMPEAAKLIRSSDADAIARGRHGDPFAVLGPHAVKGGTVIRTFQPQARTVFVLAADGETEMSRAHPDGLFAVKLKGSPAYRLRAVRHDGGTEELDDPYRFPPVLGDLDVHLLAEGTHLRTFEKLGAQVRIVDGVAGVDFALWAPNASRVSVVGDFNGWDGRRHPMRLRHEAGMWEIFIPGLGQGAVYKYEIVASDGRLLPLKADPYGHFAEVPPKTASVVWELGRRDWADADWMAAQKARNDRHAPISIYEVHLGSWRRVPEDCNRPLSYLEMADQLGDYVADLGFTHVEFLPIHEHPFGGSWGYQPVGLFAPTSRYGTPDEFRTLVDRLHQKGIGVIIDWVAGHFPNDPHGLHHFDGTHLYEHEDPRLGVHKDWNTLIYNYGRSEVVNYLYANALYWLEQYHVDGLRVDAVASMLYLDYSREPGEWIPNRHGGNENLEAIDFLRRMNMLVYAEHPGAMTIAEESTAWPMVSRPVHLGGLGFGYKWNMGWMHDTLRYFSKDPIHRRYHHDSLTFAQLYAYHENFVLPLSHDEVVHGKGSIFGRMPGDPWQRFANLRAYYGFMWTQPGKKLLFMGQEFAQQSEWNEDASLDWHLLGDGRNEGVMRLIRDLNRLYRTEPALHQLDNEPAGFAWIDCNDRDNSVLTWLRKGFDPGDFLVVAGNYTPMVRDSYRIGVPEPGWYRELLNTDSEWYGGANIHNGGGVHTEEVPWHGHGFSICLRLPPLATCVFKRER.

The Nucleophile role is filled by D419. The Proton donor role is filled by E472.

This sequence belongs to the glycosyl hydrolase 13 family. GlgB subfamily. As to quaternary structure, monomer.

It catalyses the reaction Transfers a segment of a (1-&gt;4)-alpha-D-glucan chain to a primary hydroxy group in a similar glucan chain.. Its pathway is glycan biosynthesis; glycogen biosynthesis. In terms of biological role, catalyzes the formation of the alpha-1,6-glucosidic linkages in glycogen by scission of a 1,4-alpha-linked oligosaccharide from growing alpha-1,4-glucan chains and the subsequent attachment of the oligosaccharide to the alpha-1,6 position. This Paramagnetospirillum magneticum (strain ATCC 700264 / AMB-1) (Magnetospirillum magneticum) protein is 1,4-alpha-glucan branching enzyme GlgB.